The following is a 968-amino-acid chain: C-1-tetrahydrofolate synthase, cytoplasmic (968 aa).

The segment at Met-1 to Leu-338 is methylenetetrahydrofolate dehydrogenase and cyclohydrolase. Substrate is bound by residues Tyr-86–Lys-90 and Val-133–Met-135. NADP(+) contacts are provided by residues Gly-205–Ser-207 and Ser-230. Position 305–309 (Pro-305–Gly-309) interacts with substrate. Residues Gln-339–Phe-968 form a formyltetrahydrofolate synthetase region. Thr-413–Thr-420 is an ATP binding site.

In the N-terminal section; belongs to the tetrahydrofolate dehydrogenase/cyclohydrolase family. It in the C-terminal section; belongs to the formate--tetrahydrofolate ligase family. Homodimer. As to expression, present in all tissues.

It is found in the cytoplasm. The enzyme catalyses (6R)-5,10-methylene-5,6,7,8-tetrahydrofolate + NADP(+) = (6R)-5,10-methenyltetrahydrofolate + NADPH. It catalyses the reaction (6R)-5,10-methenyltetrahydrofolate + H2O = (6R)-10-formyltetrahydrofolate + H(+). It carries out the reaction (6S)-5,6,7,8-tetrahydrofolate + formate + ATP = (6R)-10-formyltetrahydrofolate + ADP + phosphate. Its pathway is one-carbon metabolism; tetrahydrofolate interconversion. This Drosophila melanogaster (Fruit fly) protein is C-1-tetrahydrofolate synthase, cytoplasmic (pug).